The sequence spans 294 residues: Probable 2-(5''-triphosphoribosyl)-3'-dephosphocoenzyme-A synthase (294 aa).

This sequence belongs to the CitG/MdcB family.

It catalyses the reaction 3'-dephospho-CoA + ATP = 2'-(5''-triphospho-alpha-D-ribosyl)-3'-dephospho-CoA + adenine. The chain is Probable 2-(5''-triphosphoribosyl)-3'-dephosphocoenzyme-A synthase from Streptococcus pyogenes serotype M49 (strain NZ131).